A 440-amino-acid chain; its full sequence is Xylose isomerase (440 aa).

Catalysis depends on residues His-100 and Asp-103. Residues Glu-231, Glu-267, His-270, Asp-295, Asp-306, Asp-308, and Asp-338 each contribute to the Mg(2+) site.

It belongs to the xylose isomerase family. In terms of assembly, homotetramer. The cofactor is Mg(2+).

The protein localises to the cytoplasm. It carries out the reaction alpha-D-xylose = alpha-D-xylulofuranose. The chain is Xylose isomerase from Burkholderia multivorans (strain ATCC 17616 / 249).